A 297-amino-acid polypeptide reads, in one-letter code: Ribosomal RNA small subunit methyltransferase A (297 aa).

The S-adenosyl-L-methionine site is built by N31, L33, G58, E79, D104, and N129.

The protein belongs to the class I-like SAM-binding methyltransferase superfamily. rRNA adenine N(6)-methyltransferase family. RsmA subfamily.

The protein resides in the cytoplasm. It catalyses the reaction adenosine(1518)/adenosine(1519) in 16S rRNA + 4 S-adenosyl-L-methionine = N(6)-dimethyladenosine(1518)/N(6)-dimethyladenosine(1519) in 16S rRNA + 4 S-adenosyl-L-homocysteine + 4 H(+). Its function is as follows. Specifically dimethylates two adjacent adenosines (A1518 and A1519) in the loop of a conserved hairpin near the 3'-end of 16S rRNA in the 30S particle. May play a critical role in biogenesis of 30S subunits. This is Ribosomal RNA small subunit methyltransferase A from Staphylococcus aureus (strain MRSA252).